A 421-amino-acid polypeptide reads, in one-letter code: Gamma-glutamyl phosphate reductase (421 aa).

The protein belongs to the gamma-glutamyl phosphate reductase family.

The protein resides in the cytoplasm. The catalysed reaction is L-glutamate 5-semialdehyde + phosphate + NADP(+) = L-glutamyl 5-phosphate + NADPH + H(+). It participates in amino-acid biosynthesis; L-proline biosynthesis; L-glutamate 5-semialdehyde from L-glutamate: step 2/2. Catalyzes the NADPH-dependent reduction of L-glutamate 5-phosphate into L-glutamate 5-semialdehyde and phosphate. The product spontaneously undergoes cyclization to form 1-pyrroline-5-carboxylate. The sequence is that of Gamma-glutamyl phosphate reductase from Brucella suis biovar 1 (strain 1330).